We begin with the raw amino-acid sequence, 264 residues long: 3-methyl-2-oxobutanoate hydroxymethyltransferase (264 aa).

Mg(2+)-binding residues include aspartate 45 and aspartate 84. Residues 45-46 (DS), aspartate 84, and lysine 112 each bind 3-methyl-2-oxobutanoate. Position 114 (glutamate 114) interacts with Mg(2+). Glutamate 181 serves as the catalytic Proton acceptor.

It belongs to the PanB family. In terms of assembly, homodecamer; pentamer of dimers. Mg(2+) serves as cofactor.

It localises to the cytoplasm. The catalysed reaction is 3-methyl-2-oxobutanoate + (6R)-5,10-methylene-5,6,7,8-tetrahydrofolate + H2O = 2-dehydropantoate + (6S)-5,6,7,8-tetrahydrofolate. The protein operates within cofactor biosynthesis; (R)-pantothenate biosynthesis; (R)-pantoate from 3-methyl-2-oxobutanoate: step 1/2. Its function is as follows. Catalyzes the reversible reaction in which hydroxymethyl group from 5,10-methylenetetrahydrofolate is transferred onto alpha-ketoisovalerate to form ketopantoate. This Pseudoalteromonas translucida (strain TAC 125) protein is 3-methyl-2-oxobutanoate hydroxymethyltransferase.